A 244-amino-acid chain; its full sequence is tRNA pseudouridine synthase A 2 (244 aa).

The active-site Nucleophile is Asp-52. Tyr-110 contributes to the substrate binding site.

The protein belongs to the tRNA pseudouridine synthase TruA family. In terms of assembly, homodimer.

It catalyses the reaction uridine(38/39/40) in tRNA = pseudouridine(38/39/40) in tRNA. Its function is as follows. Formation of pseudouridine at positions 38, 39 and 40 in the anticodon stem and loop of transfer RNAs. This Clostridium perfringens (strain 13 / Type A) protein is tRNA pseudouridine synthase A 2.